The following is a 129-amino-acid chain: Ribonuclease VapC12 (129 aa).

Positions 5 and 94 each coordinate Mg(2+).

Belongs to the PINc/VapC protein family. Mg(2+) is required as a cofactor.

Toxic component of a type II toxin-antitoxin (TA) system. An RNase. The cognate antitoxin is VapB12. The chain is Ribonuclease VapC12 from Mycobacterium tuberculosis (strain CDC 1551 / Oshkosh).